The primary structure comprises 692 residues: 5-taurinomethyluridine-[tRNA] synthase subunit MTO1, mitochondrial (692 aa).

The N-terminal 25 residues, Met1–Leu25, are a transit peptide targeting the mitochondrion. FAD contacts are provided by residues Gly43 to Gly48, Val155, Ser218, and Gln407. The residue at position 508 (Lys508) is an N6-methyllysine. The segment at Ala669–Leu692 is disordered. Residues Asn683–Leu692 are compositionally biased toward basic and acidic residues.

Belongs to the MnmG family. Homodimer; forms a dimer in the presence of potassium. Interacts with GTPBP3; forms the GTPBP3-MTO1 complex composed of homodimers of GTPBP3 and MTO1. It depends on FAD as a cofactor.

It is found in the mitochondrion. The catalysed reaction is 5,10-methylenetetrahydrofolate + uridine(34) in tRNA + taurine + GTP + A + H2O = 5-taurinomethyluridine(34) in tRNA + 7,8-dihydrofolate + GDP + AH2 + phosphate + H(+). In terms of biological role, component of the GTPBP3-MTO1 complex that catalyzes the 5-taurinomethyluridine (taum(5)U) modification at the 34th wobble position (U34) of mitochondrial tRNAs (mt-tRNAs), which plays a role in mt-tRNA decoding and mitochondrial translation. Taum(5)U formation on mammalian mt-tRNA requires the presence of both GTPBP3-mediated GTPase activity and MTO1 catalytic activity. This is 5-taurinomethyluridine-[tRNA] synthase subunit MTO1, mitochondrial (MTO1) from Macaca fascicularis (Crab-eating macaque).